Here is a 1373-residue protein sequence, read N- to C-terminus: MYNPYQQQQAGFAPQQTGFAYANQPSQQPQQSQSQLANQATGFYQPQLQQQTLFASSQFQPQTSFGTVASIQPQQTGYIQTQPTGFASQGIAAPTVVENSSLKIPSIRLSFITAEDQKKFEHLFRTAVPKGEQAINGDSASTILLRSGLTPVTLAEIWSLSDTNKSGSLLFPEFALSLHLCSMAKRGEPLPGYLPEKWANEVKSFVDAISFSVPEDPDKILANTPFASFSGTNTQDDWLSNLNNQTNSAAATSNFGAPGFTSFQPQATGYGGGLPLASQRTGPGLASIGTTSFSAPTAPTAPTAAPLASQRTGGGTLIPLQPQQTAGLIPAQKTGPLNGFPQQLQQQSTGYQPQLQQLQQQSTGYQPQLQQLQQQSTGYQSQLLAQRTGPLQSQSTGFQPAPLQSQPTGRPGEWGFVHTPTGGIPGLNAMQQHFLPNADLPTNNLQNQMGGDLKSNVTWAITKQEKSIYDGIFQAWDTTRRGYIDGDVALNVFSKSGLSRPDLESIWTLADTSDRGKLNKDEFSVAMHLVYRRLNGLDIPLRLPPELIPPSNKYLQDSMDTMKNSLRGGVNNKSYSGGKQTKSDGTRFKNDDDDFGYVSNARHRRRSTATDNGPKSIKSSSDSDLSVEDLKKLIREKRILIDALDAEDQDAVLNKKKESQHNIDIIEKLKSQIKDVQASLNSKGLDAPIEEKKQLLGVLNSLTRDKVPNLISNIYKVHNDIAKAKVELLKAKLLKQNPSWNPDSNESEIQGTGPNGEVTELDRRKFQSKQLLKQRMAALTGRTSNSGSNADLDLQLKQESEKAKSESINQSNIVKDIESSIKELEDGCATHLQTSATEESGSEKWERGQGISAEVAAFVRELNSFAESQRRNIAAQNSSSLESSTVSSTAEVSQPASSVSSQPVSASSSYRTPEERAAYIKAQAEKKMNERLAKLGISRSRNATIAEPNPPTKVDAQPATPPVAPAVVESAAVSPPVKKQPPPVSPRSVRVEQQKPAPPVDSSSDDDDEEYAAILKQKQQLEAKEKERKLAKQKQKQARLDKIKKEMEEIKRRQAEAEAEEDSDEEPSSVPTYTVSNSAPKAVAKTAEDPVVEPVIAKSVEQEAVPDQVAAPKAHESNPFSKVQATPTGNSTNPFFKPTTKESTIDPKKAAAQRASQRGLSKNDGWSDSDDNESEDDQPNRAGAAQLASLLFGGMAPKSKESTPQQTPQQEKTESEALSKSVSTLKDPSGSDDEFSTPPPDAPSQQTVAPPIPTEVPPIPTGAPPIPTGAPPIPTEAPPIPVGGPSSFAPPPPPPPPPPPGPPPIPNAPFGAPPPPPPPPGPPPPVSNGVTAPPVTADIGALLGQIQGGKSLKKVDASQQKISSNDLAGTVLS.

The 90-residue stretch at 116–205 (DQKKFEHLFR…EKWANEVKSF (90 aa)) folds into the EH 1 domain. An EF-hand 1 domain is found at 149 to 184 (LTPVTLAEIWSLSDTNKSGSLLFPEFALSLHLCSMA). 2 disordered regions span residues 271–362 (GGGL…QQQS) and 385–409 (AQRT…QPTG). Composition is skewed to low complexity over residues 290-309 (TTSF…PLAS) and 341-362 (PQQL…QQQS). A compositionally biased stretch (polar residues) spans 389–408 (GPLQSQSTGFQPAPLQSQPT). The 90-residue stretch at 465–554 (EKSIYDGIFQ…PELIPPSNKY (90 aa)) folds into the EH 2 domain. The EF-hand 2 domain maps to 498–533 (LSRPDLESIWTLADTSDRGKLNKDEFSVAMHLVYRR). 6 disordered regions span residues 562–622 (MKNS…SSSD), 739–758 (SWNP…NGEV), 876–914 (QNSS…RTPE), 931–1089 (RLAK…TAED), 1103–1335 (EAVP…APPV), and 1349–1373 (GKSL…TVLS). Polar residues predominate over residues 571–580 (NNKSYSGGKQ). Basic and acidic residues predominate over residues 581-590 (TKSDGTRFKN). Residues 739–752 (SWNPDSNESEIQGT) are compositionally biased toward polar residues. Composition is skewed to low complexity over residues 878-909 (SSSL…ASSS) and 965-977 (PAVV…SPPV). Positions 1007-1066 (DDEEYAAILKQKQQLEAKEKERKLAKQKQKQARLDKIKKEMEEIKRRQAEAEAEEDSDEE) form a coiled coil. 2 stretches are compositionally biased toward basic and acidic residues: residues 1019 to 1030 (QQLEAKEKERKL) and 1038 to 1056 (ARLD…RQAE). Acidic residues predominate over residues 1057–1067 (AEAEEDSDEEP). 2 stretches are compositionally biased toward polar residues: residues 1070–1079 (VPTYTVSNSA) and 1118–1134 (NPFS…STNP). A compositionally biased stretch (basic and acidic residues) spans 1139-1149 (TTKESTIDPKK). Polar residues predominate over residues 1154–1166 (RASQRGLSKNDGW). The span at 1167–1177 (SDSDDNESEDD) shows a compositional bias: acidic residues. Positions 1250–1326 (PPIPTEVPPI…PPPPGPPPPV (77 aa)) are enriched in pro residues. The WH2 domain maps to 1338–1355 (DIGALLGQIQGGKSLKKV). Polar residues predominate over residues 1357 to 1373 (ASQQKISSNDLAGTVLS).

The protein belongs to the PAN1 family. In terms of assembly, component of the PAN1 actin cytoskeleton-regulatory complex.

The protein localises to the cell membrane. It localises to the endosome membrane. The protein resides in the cytoplasm. Its subcellular location is the cytoskeleton. It is found in the actin patch. Its function is as follows. Component of the PAN1 actin cytoskeleton-regulatory complex required for the internalization of endosomes during actin-coupled endocytosis. The complex links the site of endocytosis to the cell membrane-associated actin cytoskeleton. Mediates uptake of external molecules and vacuolar degradation of plasma membrane proteins. Plays a role in the proper organization of the cell membrane-associated actin cytoskeleton and promotes its destabilization. This Scheffersomyces stipitis (strain ATCC 58785 / CBS 6054 / NBRC 10063 / NRRL Y-11545) (Yeast) protein is Actin cytoskeleton-regulatory complex protein PAN1 (PAN1).